We begin with the raw amino-acid sequence, 489 residues long: Interferon gamma receptor 1 (489 aa).

The first 17 residues, M1–A17, serve as a signal peptide directing secretion. The Extracellular portion of the chain corresponds to E18–G245. 3 N-linked (GlcNAc...) asparagine glycosylation sites follow: N34, N79, and N86. A disulfide bridge connects residues C77 and C85. Residues C122 and C167 are joined by a disulfide bond. N-linked (GlcNAc...) asparagine glycosylation occurs at N179. Cystine bridges form between C195–C200 and C214–C235. N-linked (GlcNAc...) asparagine glycosylation occurs at N240. A helical membrane pass occupies residues S246–I266. The Cytoplasmic segment spans residues C267–S489. Positions A329–E437 are disordered. Positions H335–E348 are enriched in basic and acidic residues. Residues L349–E360 are compositionally biased toward polar residues. S369 carries the post-translational modification Phosphoserine. Position 372 is a phosphothreonine (T372). S378 bears the Phosphoserine mark. The segment covering S379–S391 has biased composition (low complexity). The span at N401 to F412 shows a compositional bias: basic and acidic residues. S403 carries the post-translational modification Phosphoserine. The segment covering D415 to E429 has biased composition (low complexity). Residue Y457 is modified to Phosphotyrosine.

It belongs to the type II cytokine receptor family. Monomer. Heterodimer with IFNGR2, to form the IFNG receptor complex. Interacts with JAK1. Interacts (when phosphorylated) with STAT1. Interacts with SOCS1. Post-translationally, phosphorylated at Ser/Thr residues. Phosphorylation of Tyr-457 is required for IFNG receptor signal transduction. Influenza virus infection leads to phosphorylation in a CSNK1A1-dependent manner. Ubiquitinated after phosphorylation in a CSNK1A1-dependent manner, leading to the lysosome-dependent degradation. Proteasomally degraded through 'Lys-48'-mediated ubiquitination. Ubiquitination is necessary for efficient IFNGR1 signaling.

The protein localises to the cell membrane. In terms of biological role, receptor subunit for interferon gamma/INFG that plays crucial roles in antimicrobial, antiviral, and antitumor responses by activating effector immune cells and enhancing antigen presentation. Associates with transmembrane accessory factor IFNGR2 to form a functional receptor. Upon ligand binding, the intracellular domain of IFNGR1 opens out to allow association of downstream signaling components JAK1 and JAK2. In turn, activated JAK1 phosphorylates IFNGR1 to form a docking site for STAT1. Subsequent phosphorylation of STAT1 leads to dimerization, translocation to the nucleus, and stimulation of target gene transcription. STAT3 can also be activated in a similar manner although activation seems weaker. IFNGR1 intracellular domain phosphorylation also provides a docking site for SOCS1 that regulates the JAK-STAT pathway by competing with STAT1 binding to IFNGR1. The polypeptide is Interferon gamma receptor 1 (Homo sapiens (Human)).